The primary structure comprises 282 residues: Probable endonuclease 4 (282 aa).

H69, H109, E145, D179, H182, H216, D229, H231, and E261 together coordinate Zn(2+).

It belongs to the AP endonuclease 2 family. It depends on Zn(2+) as a cofactor.

It catalyses the reaction Endonucleolytic cleavage to 5'-phosphooligonucleotide end-products.. In terms of biological role, endonuclease IV plays a role in DNA repair. It cleaves phosphodiester bonds at apurinic or apyrimidinic (AP) sites, generating a 3'-hydroxyl group and a 5'-terminal sugar phosphate. The polypeptide is Probable endonuclease 4 (Campylobacter fetus subsp. fetus (strain 82-40)).